A 194-amino-acid chain; its full sequence is Probable nicotinate-nucleotide adenylyltransferase (194 aa).

The protein belongs to the NadD family.

The catalysed reaction is nicotinate beta-D-ribonucleotide + ATP + H(+) = deamido-NAD(+) + diphosphate. Its pathway is cofactor biosynthesis; NAD(+) biosynthesis; deamido-NAD(+) from nicotinate D-ribonucleotide: step 1/1. Its function is as follows. Catalyzes the reversible adenylation of nicotinate mononucleotide (NaMN) to nicotinic acid adenine dinucleotide (NaAD). This chain is Probable nicotinate-nucleotide adenylyltransferase, found in Chlorobium luteolum (strain DSM 273 / BCRC 81028 / 2530) (Pelodictyon luteolum).